The following is a 741-amino-acid chain: Ion-translocating oxidoreductase complex subunit C (741 aa).

2 4Fe-4S ferredoxin-type domains span residues 369-397 (GEPQ…QQLY) and 407-436 (KATT…VQYF). 8 residues coordinate [4Fe-4S] cluster: Cys377, Cys380, Cys383, Cys387, Cys416, Cys419, Cys422, and Cys426. A disordered region spans residues 627–654 (IARAKARKLEQQQQANAEPEEQVDPRKA).

This sequence belongs to the 4Fe4S bacterial-type ferredoxin family. RnfC subfamily. In terms of assembly, the complex is composed of six subunits: RsxA, RsxB, RsxC, RsxD, RsxE and RsxG. [4Fe-4S] cluster is required as a cofactor.

It localises to the cell inner membrane. In terms of biological role, part of a membrane-bound complex that couples electron transfer with translocation of ions across the membrane. Required to maintain the reduced state of SoxR. This Escherichia coli O127:H6 (strain E2348/69 / EPEC) protein is Ion-translocating oxidoreductase complex subunit C.